Reading from the N-terminus, the 1062-residue chain is Carbamoyl phosphate synthase large chain (1062 aa).

The segment at 1–401 is carboxyphosphate synthetic domain; sequence MPKRTDIHKI…AMQKAVRSLE (401 aa). Residues arginine 129, arginine 169, glycine 175, glycine 176, lysine 208, isoleucine 210, glutamate 215, glycine 241, isoleucine 242, histidine 243, glutamine 284, and glutamate 298 each contribute to the ATP site. Positions 133-327 constitute an ATP-grasp 1 domain; the sequence is KELCKELGEP…IAKMAAKIAI (195 aa). Mg(2+) contacts are provided by glutamine 284, glutamate 298, and asparagine 300. Residues glutamine 284, glutamate 298, and asparagine 300 each contribute to the Mn(2+) site. Positions 402 to 546 are oligomerization domain; the sequence is IDEKDLYSET…YSTYDGENES (145 aa). Positions 547–929 are carbamoyl phosphate synthetic domain; that stretch reads HKSGKKSVIV…ALYKAFAGAK (383 aa). Residues 671–861 enclose the ATP-grasp 2 domain; it reads DQIIKKLKLN…MAQVATRVIM (191 aa). Residues arginine 707, aspartate 746, leucine 748, glutamate 752, glycine 777, valine 778, histidine 779, serine 780, glutamine 820, and glutamate 832 each coordinate ATP. Mg(2+) contacts are provided by glutamine 820, glutamate 832, and asparagine 834. Mn(2+) contacts are provided by glutamine 820, glutamate 832, and asparagine 834. The MGS-like domain occupies 930–1062; it reads MQLPENGNVL…NRSFATDALK (133 aa). Residues 930-1062 form an allosteric domain region; sequence MQLPENGNVL…NRSFATDALK (133 aa).

The protein belongs to the CarB family. As to quaternary structure, composed of two chains; the small (or glutamine) chain promotes the hydrolysis of glutamine to ammonia, which is used by the large (or ammonia) chain to synthesize carbamoyl phosphate. Tetramer of heterodimers (alpha,beta)4. Mg(2+) is required as a cofactor. The cofactor is Mn(2+).

The enzyme catalyses hydrogencarbonate + L-glutamine + 2 ATP + H2O = carbamoyl phosphate + L-glutamate + 2 ADP + phosphate + 2 H(+). It catalyses the reaction hydrogencarbonate + NH4(+) + 2 ATP = carbamoyl phosphate + 2 ADP + phosphate + 2 H(+). It participates in amino-acid biosynthesis; L-arginine biosynthesis; carbamoyl phosphate from bicarbonate: step 1/1. The protein operates within pyrimidine metabolism; UMP biosynthesis via de novo pathway; (S)-dihydroorotate from bicarbonate: step 1/3. In terms of biological role, large subunit of the glutamine-dependent carbamoyl phosphate synthetase (CPSase). CPSase catalyzes the formation of carbamoyl phosphate from the ammonia moiety of glutamine, carbonate, and phosphate donated by ATP, constituting the first step of 2 biosynthetic pathways, one leading to arginine and/or urea and the other to pyrimidine nucleotides. The large subunit (synthetase) binds the substrates ammonia (free or transferred from glutamine from the small subunit), hydrogencarbonate and ATP and carries out an ATP-coupled ligase reaction, activating hydrogencarbonate by forming carboxy phosphate which reacts with ammonia to form carbamoyl phosphate. The chain is Carbamoyl phosphate synthase large chain from Lactobacillus johnsonii (strain CNCM I-12250 / La1 / NCC 533).